A 478-amino-acid chain; its full sequence is Serine carboxypeptidase-like 33 (478 aa).

The signal sequence occupies residues 1-33 (MNLTLPMKKQKFLLIISLLILLSLLHQDYHIEA). 3 disulfides stabilise this stretch: Cys95–Cys361, Cys257–Cys268, and Cys292–Cys330. Asn114 and Asn146 each carry an N-linked (GlcNAc...) asparagine glycan. Residue Ser188 is part of the active site. N-linked (GlcNAc...) asparagine glycosylation is found at Asn263, Asn295, and Asn362. Residues Asp398 and His451 contribute to the active site.

This sequence belongs to the peptidase S10 family. As to expression, expressed in senescent leaves and flowers.

It is found in the secreted. Functionally, probable carboxypeptidase. This chain is Serine carboxypeptidase-like 33 (SCPL33), found in Arabidopsis thaliana (Mouse-ear cress).